Consider the following 72-residue polypeptide: Potassium channel toxin kappa-KTx 5.1 (72 aa).

The N-terminal stretch at 1–23 (MKLLPLLFVILIVCAILPDEASC) is a signal peptide. Residues 24–43 (DQSELERKEENFKDESREIV) constitute a propeptide that is removed on maturation. Cystine bridges form between Cys47–Cys64 and Cys51–Cys60. Position 70 is a histidine amide (His70).

The protein belongs to the short scorpion toxin superfamily. Potassium channel inhibitor kappa-KTx family. Kappa-KTx 5 subfamily. As to expression, expressed by the venom gland.

Its subcellular location is the secreted. Its function is as follows. Weak blocker of potassium channels Kv1.1/KCNA1 (IC(50)=578.5 nM-9.9 uM) and Kv1.6/KCNA6 (~60% block at 30 uM of toxin). Acts by binding to the pore and occluding it. Has a voltage-dependent mode of action, which can be explained by a high content of basic residues causing repulsions at higher membrane voltages. Shows a weak interaction with muscle-type nicotinic acetylcholine receptors (nAChR), since it inhibits alpha-bungarotoxin binding to muscle-type nAChR from T.californica (IC(50)=1.4 uM). This suggests it probably weakly inhibits muscle nAChR. The mode of binding to potassium channels of this toxin differs from its homologs (including HefuTx1), since it lacks the key aromatic residue of the functional dyad. In contrast, its functionally important site is composed of a number of basic residues. The protein is Potassium channel toxin kappa-KTx 5.1 of Heterometrus laoticus (Thai giant scorpion).